Here is a 194-residue protein sequence, read N- to C-terminus: dITP/XTP pyrophosphatase (194 aa).

7 to 12 (SGNVNK) serves as a coordination point for substrate. Residues E38 and D67 each contribute to the Mg(2+) site. Catalysis depends on D67, which acts as the Proton acceptor. Substrate contacts are provided by residues S68, 151–154 (FGYD), K174, and 179–180 (HR).

Belongs to the HAM1 NTPase family. In terms of assembly, homodimer. The cofactor is Mg(2+).

It catalyses the reaction XTP + H2O = XMP + diphosphate + H(+). The enzyme catalyses dITP + H2O = dIMP + diphosphate + H(+). The catalysed reaction is ITP + H2O = IMP + diphosphate + H(+). Functionally, pyrophosphatase that catalyzes the hydrolysis of nucleoside triphosphates to their monophosphate derivatives, with a high preference for the non-canonical purine nucleotides XTP (xanthosine triphosphate), dITP (deoxyinosine triphosphate) and ITP. Seems to function as a house-cleaning enzyme that removes non-canonical purine nucleotides from the nucleotide pool, thus preventing their incorporation into DNA/RNA and avoiding chromosomal lesions. This Treponema denticola (strain ATCC 35405 / DSM 14222 / CIP 103919 / JCM 8153 / KCTC 15104) protein is dITP/XTP pyrophosphatase.